The sequence spans 140 residues: Small ribosomal subunit protein uS12 (140 aa).

Residue D102 is modified to 3-methylthioaspartic acid.

Belongs to the universal ribosomal protein uS12 family. In terms of assembly, part of the 30S ribosomal subunit. Contacts proteins S8 and S17. May interact with IF1 in the 30S initiation complex.

In terms of biological role, with S4 and S5 plays an important role in translational accuracy. Functionally, interacts with and stabilizes bases of the 16S rRNA that are involved in tRNA selection in the A site and with the mRNA backbone. Located at the interface of the 30S and 50S subunits, it traverses the body of the 30S subunit contacting proteins on the other side and probably holding the rRNA structure together. The combined cluster of proteins S8, S12 and S17 appears to hold together the shoulder and platform of the 30S subunit. The sequence is that of Small ribosomal subunit protein uS12 from Bacillus anthracis (strain A0248).